The following is a 383-amino-acid chain: DNA dC-&gt;dU-editing enzyme APOBEC-3G (383 aa).

Residues 1-60 form an essential for cytoplasmic localization region; sequence MKPHFRNTVERMYRGTFFYNFNNRPILSRRNTVWLCYEVKTRGPSMPTWGAKIFRGQLYP. CMP/dCMP-type deaminase domains lie at 29 to 138 and 214 to 327; these read RRNT…LRIL and GQRE…LRTL. T32 carries the phosphothreonine; by PKA modification. 3 residues coordinate Zn(2+): H65, C97, and C100. Residues 209–335 form a necessary for homooligomerization region; it reads KPWVSGQRET…TLHRDGAKIA (127 aa). Residues 213–215 form an interaction with DNA region; the sequence is SGQ. Position 218 is a phosphothreonine; by PKA and CAMK2 (T218). H257 provides a ligand contact to Zn(2+). The active-site Proton donor is the E259. Residues C287 and C290 each contribute to the Zn(2+) site. The segment at 312 to 319 is interaction with DNA; it reads RIYDDQGR.

It belongs to the cytidine and deoxycytidylate deaminase family. As to quaternary structure, homodimer. Homooligomer. Can bind RNA to form ribonucleoprotein complexes of high-molecular-mass (HMM) or low-molecular-mass (LMM). HMM is inactive and heterogeneous in protein composition because of binding nonselectively to cellular RNAs, which in turn are associated with variety of cellular proteins. The LMM form which is enzymatically active has few or no RNAs associated. Its ability to form homooligomer is distinct from its ability to assemble into HMM. Interacts with APOBEC3B, APOBEC3F, MOV10, AGO2, EIF4E, EIF4ENIF1, DCP2 and DDX6 in an RNA-dependent manner. Interacts with AGO1, AGO3 and PKA/PRKACA. The cofactor is Zn(2+).

It is found in the cytoplasm. Its subcellular location is the nucleus. The protein localises to the P-body. The catalysed reaction is a 2'-deoxycytidine in single-stranded DNA + H2O + H(+) = a 2'-deoxyuridine in single-stranded DNA + NH4(+). In terms of biological role, DNA deaminase (cytidine deaminase) which acts as an inhibitor of retrovirus replication and retrotransposon mobility. After the penetration of retroviral nucleocapsids into target cells of infection and the initiation of reverse transcription, it can induce the conversion of cytosine to uracil in the minus-sense single-strand viral DNA, leading to G-to-A hypermutations in the subsequent plus-strand viral DNA. The resultant detrimental levels of mutations in the proviral genome, along with a deamination-independent mechanism that works prior to the proviral integration, together exert efficient antiretroviral effects in infected target cells. Selectively targets single-stranded DNA and does not deaminate double-stranded DNA or single- or double-stranded RNA. The protein is DNA dC-&gt;dU-editing enzyme APOBEC-3G (APOBEC3G) of Erythrocebus patas (Red guenon).